A 98-amino-acid polypeptide reads, in one-letter code: NADH-ubiquinone oxidoreductase chain 4L (98 aa).

The next 3 membrane-spanning stretches (helical) occupy residues 2–22 (TLTT…TLIF), 29–49 (TLLC…ITAL), and 61–81 (ITTL…LTMV).

It belongs to the complex I subunit 4L family. Core subunit of respiratory chain NADH dehydrogenase (Complex I) which is composed of 45 different subunits.

Its subcellular location is the mitochondrion inner membrane. The enzyme catalyses a ubiquinone + NADH + 5 H(+)(in) = a ubiquinol + NAD(+) + 4 H(+)(out). In terms of biological role, core subunit of the mitochondrial membrane respiratory chain NADH dehydrogenase (Complex I) which catalyzes electron transfer from NADH through the respiratory chain, using ubiquinone as an electron acceptor. Part of the enzyme membrane arm which is embedded in the lipid bilayer and involved in proton translocation. This chain is NADH-ubiquinone oxidoreductase chain 4L (MT-ND4L), found in Oxymycterus rufus (Red hocicudo).